A 619-amino-acid polypeptide reads, in one-letter code: MTLNKKTNNENSSKTTPKLSKETDLRNDFASKNYVFNPQDKVFQIAQVFGITSAVLIKKLLQLGLKADVNQTLEKDIVELLAKDYNIQVSEPQEKHTPPQLQPQTPSLTKTKPNQKLNLQKKSPIVTIMGHVDHGKTTLLDAIRKTRVVDQEFGGITQHIGAYQVEYQGNKITFIDTPGHEAFDKMRARGAKITDICILVVAVDDCVKPQTLEALKHAQKAQIPIIVALNKIDKPNNNTQQIMQELSSYDLLPEEWGGTTPYIAISALKREGLEKILEIILLVSEIQNLQANPDQKAQGTVIEASLDKSLGLVATFIVSDGNLKVGDIVVAGASYGKIRSMEDENKKKLTKALPSQPVRVAGLKEVPQAGDIFYAVANEKQARQIVAEKKSQTKENLAKTLSPLNLEDILQDLETEKPQELNIILKADTQGSLEALQGMIAKIKVSDLKVQLLRAAVGTITETDIAFAKSSDSLLIGFNIKPASSTLKSAQRQEVKITIHNVIYRIIEDIEQKLKSMIKPTFEEVVTGKVEVRKIFNISKVGNIAGCYVTQGIVNNSDFAKVMRNDEVLFKGKIASLKHLKDNIKSAKQGYECGILLDGFNDFEINDIIETSKLSKVEE.

2 stretches are compositionally biased toward low complexity: residues 1–18 and 98–111; these read MTLNKKTNNENSSKTTPK and PPQLQPQTPSLTKT. Disordered stretches follow at residues 1-24 and 90-113; these read MTLNKKTNNENSSKTTPKLSKETD and SEPQEKHTPPQLQPQTPSLTKTKP. A tr-type G domain is found at 121–289; it reads KKSPIVTIMG…ILLVSEIQNL (169 aa). The segment at 130–137 is G1; the sequence is GHVDHGKT. 130-137 is a GTP binding site; the sequence is GHVDHGKT. The G2 stretch occupies residues 155–159; the sequence is GITQH. The segment at 176–179 is G3; that stretch reads DTPG. GTP contacts are provided by residues 176 to 180 and 230 to 233; these read DTPGH and NKID. Residues 230–233 form a G4 region; it reads NKID. The tract at residues 266 to 268 is G5; it reads SAL.

It belongs to the TRAFAC class translation factor GTPase superfamily. Classic translation factor GTPase family. IF-2 subfamily.

The protein resides in the cytoplasm. One of the essential components for the initiation of protein synthesis. Protects formylmethionyl-tRNA from spontaneous hydrolysis and promotes its binding to the 30S ribosomal subunits. Also involved in the hydrolysis of GTP during the formation of the 70S ribosomal complex. This chain is Translation initiation factor IF-2, found in Onion yellows phytoplasma (strain OY-M).